Consider the following 336-residue polypeptide: Protein SphX (336 aa).

An N-terminal signal peptide occupies residues 1–27; the sequence is MFDLSRLSRGIVPMALLLLGISACTPS.

The protein belongs to the PstS family.

Its function is as follows. May be involved in the system for phosphate transport across the cytoplasmic membrane. The protein is Protein SphX (sphX) of Synechocystis sp. (strain ATCC 27184 / PCC 6803 / Kazusa).